The sequence spans 237 residues: 7-carboxy-7-deazaguanine synthase (237 aa).

Substrate-binding positions include 15-17 (LSG) and R30. Residues 21 to 233 (STGIPTIFVR…IQTHKYIWGD (213 aa)) enclose the Radical SAM core domain. [4Fe-4S] cluster is bound by residues C34, C38, and C48. Residue T50 participates in Mg(2+) binding. T84 contacts substrate. An S-adenosyl-L-methionine-binding site is contributed by G86.

The protein belongs to the radical SAM superfamily. 7-carboxy-7-deazaguanine synthase family. Homodimer. [4Fe-4S] cluster serves as cofactor. Requires S-adenosyl-L-methionine as cofactor. It depends on Mg(2+) as a cofactor.

It carries out the reaction 6-carboxy-5,6,7,8-tetrahydropterin + H(+) = 7-carboxy-7-deazaguanine + NH4(+). The protein operates within purine metabolism; 7-cyano-7-deazaguanine biosynthesis. In terms of biological role, catalyzes the complex heterocyclic radical-mediated conversion of 6-carboxy-5,6,7,8-tetrahydropterin (CPH4) to 7-carboxy-7-deazaguanine (CDG), a step common to the biosynthetic pathways of all 7-deazapurine-containing compounds. This is 7-carboxy-7-deazaguanine synthase from Leptospira interrogans serogroup Icterohaemorrhagiae serovar Lai (strain 56601).